The following is a 542-amino-acid chain: Calcium/calmodulin-dependent protein kinase type II subunit beta (542 aa).

One can recognise a Protein kinase domain in the interval 14–272 (YQLYEDIGKG…AHEALKHPWV (259 aa)). The residue at position 17 (Tyr17) is a Phosphotyrosine. Residues 20–28 (IGKGAFSVV) and Lys43 each bind ATP. The active-site Proton acceptor is Asp136. Positions 283 to 292 (HRQETVECLK) are autoinhibitory domain. Residue Thr287 is modified to Phosphothreonine; by autocatalysis. The interval 291–301 (LKKFNARRKLK) is calmodulin-binding. Phosphothreonine; by autocatalysis occurs at positions 306 and 307. The tract at residues 349-407 (ADGVKPQTNSTKNSAAATSPKGTLPPAALEPQTTVIHNPVDGIKESSDSTHTTIEDEDT) is disordered. Polar residues predominate over residues 354 to 369 (PQTNSTKNSAAATSPK). Residues Ser367, Ser394, and Ser397 each carry the phosphoserine modification. A phosphothreonine mark is found at Thr400 and Thr401.

This sequence belongs to the protein kinase superfamily. CAMK Ser/Thr protein kinase family. CaMK subfamily. As to quaternary structure, CAMK2 is composed of 4 different chains: alpha (CAMK2A), beta (CAMK2B), gamma (CAMK2G), and delta (CAMK2D). The different isoforms assemble into homo- or heteromultimeric holoenzymes composed of 12 subunits with two hexameric rings stacked one on top of the other. Interacts with SYNGAP1, CAMK2N2 and MPDZ. Interacts with FOXO3. Interacts (when in a kinase inactive state not associated with calmodulin) with ARC; leading to target ARC to inactive synapses. Interacts with CAMK2N1; this interaction requires CAMK2B activation by Ca(2+). Post-translationally, autophosphorylation of Thr-287 following activation by Ca(2+)/calmodulin. Phosphorylation of Thr-287 locks the kinase into an activated state.

It localises to the cytoplasm. It is found in the cytoskeleton. Its subcellular location is the microtubule organizing center. The protein resides in the centrosome. The protein localises to the sarcoplasmic reticulum membrane. It localises to the synapse. It carries out the reaction L-seryl-[protein] + ATP = O-phospho-L-seryl-[protein] + ADP + H(+). It catalyses the reaction L-threonyl-[protein] + ATP = O-phospho-L-threonyl-[protein] + ADP + H(+). Its activity is regulated as follows. Activated by Ca(2+)/calmodulin. Binding of calmodulin results in conformational change that relieves intrasteric autoinhibition and allows autophosphorylation of Thr-287 which turns the kinase in a constitutively active form and confers to the kinase a Ca(2+)-independent activity. Functionally, calcium/calmodulin-dependent protein kinase that functions autonomously after Ca(2+)/calmodulin-binding and autophosphorylation, and is involved in dendritic spine and synapse formation, neuronal plasticity and regulation of sarcoplasmic reticulum Ca(2+) transport in skeletal muscle. In neurons, plays an essential structural role in the reorganization of the actin cytoskeleton during plasticity by binding and bundling actin filaments in a kinase-independent manner. This structural function is required for correct targeting of CaMK2A, which acts downstream of NMDAR to promote dendritic spine and synapse formation and maintain synaptic plasticity which enables long-term potentiation (LTP) and hippocampus-dependent learning. In developing hippocampal neurons, promotes arborization of the dendritic tree and in mature neurons, promotes dendritic remodeling. Also regulates the migration of developing neurons. Participates in the modulation of skeletal muscle function in response to exercise. In slow-twitch muscles, is involved in regulation of sarcoplasmic reticulum (SR) Ca(2+) transport and in fast-twitch muscle participates in the control of Ca(2+) release from the SR through phosphorylation of triadin, a ryanodine receptor-coupling factor, and phospholamban (PLN/PLB), an endogenous inhibitor of SERCA2A/ATP2A2. In response to interferon-gamma (IFN-gamma) stimulation, catalyzes phosphorylation of STAT1, stimulating the JAK-STAT signaling pathway. Phosphorylates reticulophagy regulator RETREG1 at 'Ser-147' under endoplasmic reticulum stress conditions which enhances RETREG1 oligomerization and its membrane scission and reticulophagy activity. The protein is Calcium/calmodulin-dependent protein kinase type II subunit beta (CAMK2B) of Bos taurus (Bovine).